The following is a 91-amino-acid chain: UPF0298 protein OB1449 (91 aa).

It belongs to the UPF0298 family.

It localises to the cytoplasm. This Oceanobacillus iheyensis (strain DSM 14371 / CIP 107618 / JCM 11309 / KCTC 3954 / HTE831) protein is UPF0298 protein OB1449.